A 271-amino-acid chain; its full sequence is Protein phosphatase 1 regulatory subunit 3B-B (271 aa).

Positions 56 to 59 match the PP1-binding motif motif; it reads RVSF. A CBM21 domain is found at 119-227; it reads RNRLKADSVC…SNKGLNYRIV (109 aa).

As to quaternary structure, interacts with glycogen, PPP1CC catalytic subunit of PP1 and PYGL. Associates with glycogen particles. Forms complexes with debranching enzyme, glycogen phosphorylase, glycogen synthase and phosphorylase kinase which is necessary for its regulation of PP1 activity.

Acts as a glycogen-targeting subunit for phosphatase PP1. Facilitates interaction of the PP1 with enzymes of the glycogen metabolism and regulates its activity. Suppresses the rate at which PP1 dephosphorylates (inactivates) glycogen phosphorylase and enhances the rate at which it activates glycogen synthase and therefore limits glycogen breakdown. This is Protein phosphatase 1 regulatory subunit 3B-B (ppp1r3b-b) from Xenopus laevis (African clawed frog).